The sequence spans 511 residues: Histidine ammonia-lyase (511 aa).

Residues 143–145 (ASG) constitute a cross-link (5-imidazolinone (Ala-Gly)). S144 is subject to 2,3-didehydroalanine (Ser).

Belongs to the PAL/histidase family. Contains an active site 4-methylidene-imidazol-5-one (MIO), which is formed autocatalytically by cyclization and dehydration of residues Ala-Ser-Gly.

The protein resides in the cytoplasm. It catalyses the reaction L-histidine = trans-urocanate + NH4(+). Its pathway is amino-acid degradation; L-histidine degradation into L-glutamate; N-formimidoyl-L-glutamate from L-histidine: step 1/3. In Idiomarina loihiensis (strain ATCC BAA-735 / DSM 15497 / L2-TR), this protein is Histidine ammonia-lyase.